Reading from the N-terminus, the 1603-residue chain is Gag-Pol polyprotein (1603 aa).

Residues 124 to 141 are compositionally biased toward basic and acidic residues; the sequence is KGEEVGETTAQRDAKMAP. A disordered region spans residues 124-144; that stretch reads KGEEVGETTAQRDAKMAPEKM. The short motif at 172–175 is the PPXY motif element; that stretch reads PPPY. The short motif at 180-184 is the LYPX(n)L motif element; it reads LYPSL. Residues 219–229 carry the Nuclear export signal motif; it reads LTDWARIREEL. 2 CCHC-type zinc fingers span residues 507–524 and 533–550; these read GLCY…QCPK and ERCQ…QCRR. A disordered region spans residues 544-571; sequence NAKQCRRRDGNQGQRPGKGLSSGSWPVS. One can recognise a Peptidase A2 domain in the interval 609–690; that stretch reads ITALLDSGAD…VRGSILGRDC (82 aa). The active-site For protease activity; shared with dimeric partner is Asp-614. Residues 750–938 enclose the Reverse transcriptase domain; it reads LQLGHIEPSL…PGVQYLGYKL (189 aa). Mg(2+) is bound by residues Asp-815, Asp-890, Asp-891, Asp-1158, Glu-1192, Asp-1213, and Asp-1272. An RNase H type-1 domain is found at 1149–1280; sequence PVPGPTAFTD…ADSQATFQAY (132 aa). The Integrase-type zinc-finger motif lies at 1280–1321; it reads YPLREAKDLHTALHIGPRALSKACNISMQQAREVVQTCPHCN. Positions 1289, 1293, 1317, and 1320 each coordinate Zn(2+). One can recognise an Integrase catalytic domain in the interval 1333–1496; that stretch reads RGLGPLQIWQ…TPIQKHWRPT (164 aa). Mg(2+)-binding residues include Asp-1344, Asp-1401, and Glu-1437. The integrase-type DNA-binding region spans 1502-1550; it reads PPVKIRIETGEWEKGWNVLVWGRGYAAVKNRDTDKVIWVPSRKVKPDVT. The involved in homooctamerization stretch occupies residues 1548–1567; it reads DVTQKDEVTKKDEASPLFAG. A disordered region spans residues 1566–1603; sequence AGISDWIPWEDEQEGLQGETASNKQERPGEDTLAANES.

Active as a homodimer. In terms of assembly, homodimer. Homomultimer. Homohexamer. As to quaternary structure, homodimer; further associates as a homooctamer. Heterodimer of alpha and beta subunits. Three forms of RT exist: alpha-alpha (alpha-Pol), beta-beta (beta-Pol), and alpha-beta, with the major form being the heterodimer. Both the polymerase and RNase H active sites are located in the alpha subunit of heterodimeric RT alpha-beta. Mg(2+) is required as a cofactor. It depends on Mn(2+) as a cofactor. Post-translationally, specific enzymatic cleavages in vivo yield mature proteins. Capsid protein p27: The cleavage at the C-terminus is slowly trimmed by the viral protease, sometimes being cut internally thereby generating the short version of the capsid protein and a capsid protein C-terminally extended by 3 amino acids in a ratio of 2:1.

It is found in the virion. It carries out the reaction DNA(n) + a 2'-deoxyribonucleoside 5'-triphosphate = DNA(n+1) + diphosphate. It catalyses the reaction Endonucleolytic cleavage to 5'-phosphomonoester.. Its function is as follows. Capsid protein p27: Self-associates to form the irregular polyhedron core composed of hexamers and pentamers, that encapsulates the genomic RNA-nucleocapsid complex. Assembles as a tube in vitro. Binds to inositol hexakisphosphate (IP6), which allows the assembly of the polyhedral capsid. Spacer peptide: Plays a role in the oligomerization of the Gag polyprotein and in the stabilization of the immature particle. Essential layering element during tube assembly. Functionally, binds strongly to viral nucleic acids and promotes their packaging. Plays a role in the maturation-stabilization of the viral dimeric RNA via highly structured zinc-binding motifs. In terms of biological role, the aspartyl protease that mediates proteolytic cleavages of Gag and Gag-Pol polyproteins during or shortly after the release of the virion from the plasma membrane. Cleavages take place as an ordered, step-wise cascade to yield mature proteins. This process is called maturation. Displays maximal activity during the budding process just prior to particle release from the cell. Its function is as follows. Catalyzes viral DNA integration into the host chromosome, by performing a series of DNA cutting and joining reactions. This recombination event is an essential step in the viral replication cycle. Has a strong preference for using the 3'-OH at the viral DNA end as a nucleophile. The sequence is that of Gag-Pol polyprotein (gag-pol) from Avian leukosis virus subgroup A (isolate RSA) (ALV-A RSA).